The chain runs to 124 residues: Small ribosomal subunit protein uS13 (124 aa).

The tract at residues 98–124 (VRGQRTRCNARTRKGPRKTVGAKRKEK) is disordered.

The protein belongs to the universal ribosomal protein uS13 family. As to quaternary structure, part of the 30S ribosomal subunit. Forms a loose heterodimer with protein S19. Forms two bridges to the 50S subunit in the 70S ribosome.

Located at the top of the head of the 30S subunit, it contacts several helices of the 16S rRNA. In the 70S ribosome it contacts the 23S rRNA (bridge B1a) and protein L5 of the 50S subunit (bridge B1b), connecting the 2 subunits; these bridges are implicated in subunit movement. Contacts the tRNAs in the A and P-sites. The protein is Small ribosomal subunit protein uS13 of Dictyoglomus turgidum (strain DSM 6724 / Z-1310).